A 446-amino-acid polypeptide reads, in one-letter code: Exodeoxyribonuclease 7 large subunit (446 aa).

It belongs to the XseA family. Heterooligomer composed of large and small subunits.

It is found in the cytoplasm. It carries out the reaction Exonucleolytic cleavage in either 5'- to 3'- or 3'- to 5'-direction to yield nucleoside 5'-phosphates.. Bidirectionally degrades single-stranded DNA into large acid-insoluble oligonucleotides, which are then degraded further into small acid-soluble oligonucleotides. The polypeptide is Exodeoxyribonuclease 7 large subunit (Streptococcus pyogenes serotype M6 (strain ATCC BAA-946 / MGAS10394)).